Reading from the N-terminus, the 79-residue chain is Protein OPG081 (79 aa).

At 2 to 8 the chain is on the intravirion side; sequence VDAITVL. A helical membrane pass occupies residues 9–29; it reads TAIGITVLMLLMVISGAALIV. Topologically, residues 30–47 are virion surface; it reads KELNPNDIFTMQSLKFNR. A helical membrane pass occupies residues 48–68; sequence AVTIFKYIGLFIYIPGTIILY. Topologically, residues 69–79 are intravirion; that stretch reads ATYVKSLLMKS.

Belongs to the orthopoxvirus OPG081 family.

It localises to the virion membrane. Envelope protein. The protein is Protein OPG081 (OPG081) of Vaccinia virus (strain Western Reserve) (VACV).